A 718-amino-acid polypeptide reads, in one-letter code: Putative aminodeoxychorismate synthase (718 aa).

The 195-residue stretch at Q9–Q203 folds into the Glutamine amidotransferase type-1 domain. Residue C88 is the Nucleophile of the active site. Catalysis depends on residues H177 and E179. Residues F266 to K718 form a PABB component region.

It in the C-terminal section; belongs to the anthranilate synthase component I family.

It localises to the cytoplasm. Its subcellular location is the nucleus. The catalysed reaction is chorismate + L-glutamine = 4-amino-4-deoxychorismate + L-glutamate. It participates in cofactor biosynthesis; tetrahydrofolate biosynthesis; 4-aminobenzoate from chorismate: step 1/2. Functionally, catalyzes the biosynthesis of 4-amino-4-deoxychorismate (ADC) from chorismate and glutamine. Required for the synthesis of 4-aminobenzoate (PABA), an important component in tetrahydrofolate biosynthesis. The protein is Putative aminodeoxychorismate synthase of Schizosaccharomyces pombe (strain 972 / ATCC 24843) (Fission yeast).